We begin with the raw amino-acid sequence, 401 residues long: MWHSPFFTAFTLFLGFFTLTLALPTNSLATTGRFTVEQRLIKTFESNWPPKELWRGLRKHHRPLPPAVSRIATHRGPSANGTVKVTPDEYNTEFVNEITIGNNTLFVDIDTGSSDFWVFSSQLPERSQLNHRIYHPEKTGTKLSKQIWEIGYGDGTGAAGNVFLDKASLAGLEVPSQAVQAATWVSYQFADQTVTDGVIGFGFDHFNGVTPKKQKTWFGNIMERLEKPIFTACLKHKAPGFYDFGFIDRTKHIGNPSYLPVDNSRGWWETTFNGFSTGRNDNSTYRFRAVVDTGTTFSLLPREITEQYYSLITGSTFDRENGGWTFPCNTTLPEFAIHINDYKAIVPGEHINWAQIPGTNTCFGGIQSVDRSPAVLGGSFLKSQFVIFDHDGPKMGFAAQR.

An N-terminal signal peptide occupies residues 1 to 22 (MWHSPFFTAFTLFLGFFTLTLA). 2 N-linked (GlcNAc...) asparagine glycosylation sites follow: Asn-80 and Asn-102. The Peptidase A1 domain occupies 94–398 (FVNEITIGNN…DHDGPKMGFA (305 aa)). Residue Asp-110 is part of the active site. Residue Asn-282 is glycosylated (N-linked (GlcNAc...) asparagine). Asp-292 is an active-site residue. A glycan (N-linked (GlcNAc...) asparagine) is linked at Asn-329.

It belongs to the peptidase A1 family.

It is found in the secreted. In terms of biological role, probable aspartic-type endopeptidase which contributes to virulence. This is Probable aspartic-type endopeptidase TRV_05382 from Trichophyton verrucosum (strain HKI 0517).